The chain runs to 389 residues: Aspartyl protease UND (389 aa).

A signal peptide spans 1–19 (MKTTMNFVFLFFLPLLINA). Residues 58–383 (FMAEIHFGSP…DLSAKTAYIN (326 aa)) enclose the Peptidase A1 domain. Asp-76 is a catalytic residue. Residues Cys-86 and Cys-92 are joined by a disulfide bond. Asn-238 carries an N-linked (GlcNAc...) asparagine glycan. The active site involves Asp-268. A disulfide bridge links Cys-304 with Cys-346.

The protein belongs to the peptidase A1 family.

In terms of biological role, probable aspartic protease activated by the transcription factor MYB80. May participate in the regulation of the timing of tapetal programmed cell death (PCD) which is critical for pollen development. The protein is Aspartyl protease UND of Arabidopsis thaliana (Mouse-ear cress).